The primary structure comprises 155 residues: MFGMGFFEILVVLVVAIIFLGPEKFPQAVVDVVKFFRAVKKTLNDAKDTLDKEINIEEIKKETLEYQKLFEDKIEGLKGVRIEELEDAKIVAEKEIKSVQDLMQDYKQSLENNAPPKHLNKEVSNREVFHNEPPKEIELIANNNTTKHDKEKEHV.

The chain crosses the membrane as a helical span at residues 1–21 (MFGMGFFEILVVLVVAIIFLG). The interval 109-155 (SLENNAPPKHLNKEVSNREVFHNEPPKEIELIANNNTTKHDKEKEHV) is disordered. 2 stretches are compositionally biased toward basic and acidic residues: residues 119–138 (LNKEVSNREVFHNEPPKEIE) and 146–155 (TKHDKEKEHV).

Belongs to the TatB family. The Tat system comprises two distinct complexes: a TatABC complex, containing multiple copies of TatA, TatB and TatC subunits, and a separate TatA complex, containing only TatA subunits. Substrates initially bind to the TatABC complex, which probably triggers association of the separate TatA complex to form the active translocon.

The protein localises to the cell inner membrane. In terms of biological role, part of the twin-arginine translocation (Tat) system that transports large folded proteins containing a characteristic twin-arginine motif in their signal peptide across membranes. Together with TatC, TatB is part of a receptor directly interacting with Tat signal peptides. TatB may form an oligomeric binding site that transiently accommodates folded Tat precursor proteins before their translocation. This is Sec-independent protein translocase protein TatB from Helicobacter acinonychis (strain Sheeba).